The chain runs to 379 residues: UDP-N-acetylglucosamine--N-acetylmuramyl-(pentapeptide) pyrophosphoryl-undecaprenol N-acetylglucosamine transferase (379 aa).

UDP-N-acetyl-alpha-D-glucosamine is bound by residues 17 to 19, Asn128, Arg169, Ser197, and Gln298; that span reads TGG.

Belongs to the glycosyltransferase 28 family. MurG subfamily.

The protein localises to the cell inner membrane. The enzyme catalyses di-trans,octa-cis-undecaprenyl diphospho-N-acetyl-alpha-D-muramoyl-L-alanyl-D-glutamyl-meso-2,6-diaminopimeloyl-D-alanyl-D-alanine + UDP-N-acetyl-alpha-D-glucosamine = di-trans,octa-cis-undecaprenyl diphospho-[N-acetyl-alpha-D-glucosaminyl-(1-&gt;4)]-N-acetyl-alpha-D-muramoyl-L-alanyl-D-glutamyl-meso-2,6-diaminopimeloyl-D-alanyl-D-alanine + UDP + H(+). It functions in the pathway cell wall biogenesis; peptidoglycan biosynthesis. In terms of biological role, cell wall formation. Catalyzes the transfer of a GlcNAc subunit on undecaprenyl-pyrophosphoryl-MurNAc-pentapeptide (lipid intermediate I) to form undecaprenyl-pyrophosphoryl-MurNAc-(pentapeptide)GlcNAc (lipid intermediate II). In Brucella melitensis biotype 2 (strain ATCC 23457), this protein is UDP-N-acetylglucosamine--N-acetylmuramyl-(pentapeptide) pyrophosphoryl-undecaprenol N-acetylglucosamine transferase.